Here is a 367-residue protein sequence, read N- to C-terminus: Isocitrate dehydrogenase [NAD] regulatory subunit 1, mitochondrial (367 aa).

Residues 1 to 25 (MSRRSLTLLKNLARNANGSGIQTRS) constitute a mitochondrion transit peptide.

It belongs to the isocitrate and isopropylmalate dehydrogenases family. Heterooligomer of catalytic and regulatory subunits. As to expression, ubiquitous. Predominantly expressed in roots, stems and leaves.

It localises to the mitochondrion. Its function is as follows. Performs an essential role in the oxidative function of the citric acid cycle. This is Isocitrate dehydrogenase [NAD] regulatory subunit 1, mitochondrial (IDH1) from Arabidopsis thaliana (Mouse-ear cress).